Consider the following 105-residue polypeptide: DNA-directed RNA polymerase subunit omega (105 aa).

The protein belongs to the RNA polymerase subunit omega family. In terms of assembly, the RNAP catalytic core consists of 2 alpha, 1 beta, 1 beta' and 1 omega subunit. When a sigma factor is associated with the core the holoenzyme is formed, which can initiate transcription.

It catalyses the reaction RNA(n) + a ribonucleoside 5'-triphosphate = RNA(n+1) + diphosphate. Its function is as follows. Promotes RNA polymerase assembly. Latches the N- and C-terminal regions of the beta' subunit thereby facilitating its interaction with the beta and alpha subunits. This chain is DNA-directed RNA polymerase subunit omega, found in Streptococcus equi subsp. zooepidemicus (strain MGCS10565).